Reading from the N-terminus, the 289-residue chain is uncharacterized protein (289 aa).

The HTH lysR-type domain maps to 1 to 58 (MDEKDWILLKILHEEQSVTKTAERLFTSQPSITYRLKKIEEIFGIELFTKRHKGITFT). Positions 18 to 37 (VTKTAERLFTSQPSITYRLK) form a DNA-binding region, H-T-H motif.

The protein belongs to the LysR transcriptional regulatory family.

This is an uncharacterized protein from Bacillus subtilis (strain 168).